The following is a 362-amino-acid chain: Probable dual-specificity RNA methyltransferase RlmN (362 aa).

E105 functions as the Proton acceptor in the catalytic mechanism. The Radical SAM core domain maps to 111-344 (HEYGNSICVT…VTIRREQGHD (234 aa)). An intrachain disulfide couples C118 to C349. Residues C125, C129, and C132 each contribute to the [4Fe-4S] cluster site. S-adenosyl-L-methionine-binding positions include 175–176 (GE), S207, 230–232 (SLH), and N306. Catalysis depends on C349, which acts as the S-methylcysteine intermediate.

It belongs to the radical SAM superfamily. RlmN family. It depends on [4Fe-4S] cluster as a cofactor.

It localises to the cytoplasm. It carries out the reaction adenosine(2503) in 23S rRNA + 2 reduced [2Fe-2S]-[ferredoxin] + 2 S-adenosyl-L-methionine = 2-methyladenosine(2503) in 23S rRNA + 5'-deoxyadenosine + L-methionine + 2 oxidized [2Fe-2S]-[ferredoxin] + S-adenosyl-L-homocysteine. The catalysed reaction is adenosine(37) in tRNA + 2 reduced [2Fe-2S]-[ferredoxin] + 2 S-adenosyl-L-methionine = 2-methyladenosine(37) in tRNA + 5'-deoxyadenosine + L-methionine + 2 oxidized [2Fe-2S]-[ferredoxin] + S-adenosyl-L-homocysteine. Functionally, specifically methylates position 2 of adenine 2503 in 23S rRNA and position 2 of adenine 37 in tRNAs. This chain is Probable dual-specificity RNA methyltransferase RlmN, found in Bacillus cytotoxicus (strain DSM 22905 / CIP 110041 / 391-98 / NVH 391-98).